A 45-amino-acid chain; its full sequence is Caltrin-like protein 1 (45 aa).

A Kazal-like domain is found at 8–45 (DSDRPNCSRYVQHLYMCTKELDPVCGTDGHTYGNRSIF). N-linked (GlcNAc...) asparagine glycosylation is found at asparagine 13 and asparagine 41.

Glycosylated.

Its subcellular location is the secreted. Its function is as follows. Inhibits calcium transport into spermatozoa. The sequence is that of Caltrin-like protein 1 from Cavia porcellus (Guinea pig).